The sequence spans 390 residues: Succinate--CoA ligase [ADP-forming] subunit beta (390 aa).

The region spanning 9–248 (KDILRKFGVS…ISEEDPFEVE (240 aa)) is the ATP-grasp domain. ATP is bound by residues Lys50, 57–59 (GRG), Glu103, Met106, and Glu111. 2 residues coordinate Mg(2+): Asn203 and Asp217. Residues Asn268 and 325–327 (GIV) contribute to the substrate site.

This sequence belongs to the succinate/malate CoA ligase beta subunit family. Heterotetramer of two alpha and two beta subunits. The cofactor is Mg(2+).

The enzyme catalyses succinate + ATP + CoA = succinyl-CoA + ADP + phosphate. It carries out the reaction GTP + succinate + CoA = succinyl-CoA + GDP + phosphate. The protein operates within carbohydrate metabolism; tricarboxylic acid cycle; succinate from succinyl-CoA (ligase route): step 1/1. Functionally, succinyl-CoA synthetase functions in the citric acid cycle (TCA), coupling the hydrolysis of succinyl-CoA to the synthesis of either ATP or GTP and thus represents the only step of substrate-level phosphorylation in the TCA. The beta subunit provides nucleotide specificity of the enzyme and binds the substrate succinate, while the binding sites for coenzyme A and phosphate are found in the alpha subunit. This chain is Succinate--CoA ligase [ADP-forming] subunit beta, found in Prosthecochloris aestuarii (strain DSM 271 / SK 413).